Here is a 904-residue protein sequence, read N- to C-terminus: MNEYRSSLVFATPDVPLRDDVRRLGALVGDLLAEQVSADFLEEIERIRTTAIARRESDTPPAGLLSLLEGREPRAAEALVRAFSTYFQVVNIAERVHRIRRRRDYQRSGTDTPQPEGLHDALRRLKAQGVTLDELSEWLPRIDVEPVFTAHPTEAVRRALLEKEQLMVASLVDNLDGMRTPNERATDAARFRMALTASWQTADSSPVRPTVEDEREHVGFYLTQVLYRVIPVMYETLEHAIEETYGSTLALPRLLRFGTWVGGDMDGNPNVDAHTIAGTLDAQRRAVLDRYLNELWQLASLLSQSTTLVAVSPALSAQLERYQALLPDAAARSRPRHGDMPYRLLNDLMRARLQATLDDADGAYAAPAELEHDLQLILDSLQANKGLHAGWFAVRRLLWRVRSFGFHLARLDVRQESSVHARAVADALGQADWDSQDATHRAGLLGPYASGEQALPQVDDEGNARLDAVFAALADARTRHGADALGSYIISMAHNRADVLTVLALARRGGLVDDAGAVPLDIVPLFETVDDLRGGTGTVQDLLADPVYRQHLRARGDTQMVMLGYSDSGKDGGIAASRWGLQRAQVELLEAAAELGVRLTFFHGRGGSIVRGGGKTTRALDAAPRGSVDGRLRVTEQGEVIHRKYGIRALALRSLEQMTGAVLLSSLRPRAPEPREDAWRPVMDLVAERSTVAYRGFVGAPDFMQYFRLATPIDVIERMTLGSRPSRRLGQDAALSNLRAIPWVFAWSQARAVIPGWYGVGSGLQAAVEAGHEDSLREMAQDWPFFRTFLDDIAMVLSKGDLNIAELFSRLAGPLHARFFPRIRDELALTKHWVKTLLGQRSLLQHDPRLALSIRLRNPYIDPISVLQVDLLQRWRATDGEDEELLRALVACVNGVAQGVQNTG.

Active-site residues include histidine 151 and lysine 570.

The protein belongs to the PEPCase type 1 family. Mg(2+) is required as a cofactor.

The enzyme catalyses oxaloacetate + phosphate = phosphoenolpyruvate + hydrogencarbonate. Its function is as follows. Forms oxaloacetate, a four-carbon dicarboxylic acid source for the tricarboxylic acid cycle. The chain is Phosphoenolpyruvate carboxylase from Xanthomonas campestris pv. campestris (strain 8004).